Here is a 194-residue protein sequence, read N- to C-terminus: Thymidylate kinase (194 aa).

Gly7 to Ser14 provides a ligand contact to ATP.

Belongs to the thymidylate kinase family.

It carries out the reaction dTMP + ATP = dTDP + ADP. Its function is as follows. Phosphorylation of dTMP to form dTDP in both de novo and salvage pathways of dTTP synthesis. The sequence is that of Thymidylate kinase from Campylobacter curvus (strain 525.92).